We begin with the raw amino-acid sequence, 437 residues long: ATP-dependent RNA helicase RhlB (437 aa).

Positions 9 to 37 (QKFADLGLKPQVTEGLEKKGFEYCTPIQA) match the Q motif motif. The Helicase ATP-binding domain maps to 40–219 (LPVLLTGQDI…FEHMHNPEHV (180 aa)). An ATP-binding site is contributed by 53–60 (AQTGTGKT). The DEAD box signature appears at 165–168 (DEAD). A Helicase C-terminal domain is found at 245–390 (ALLQTLIEEE…VSDYDASALI (146 aa)). The disordered stretch occupies residues 395-437 (APLRMRAPRTQQRRTNTGGTRSGNRKPQGRRPRQPRQSAPKQS). The span at 403–413 (RTQQRRTNTGG) shows a compositional bias: low complexity. Over residues 417–428 (GNRKPQGRRPRQ) the composition is skewed to basic residues.

Belongs to the DEAD box helicase family. RhlB subfamily. As to quaternary structure, component of the RNA degradosome, which is a multiprotein complex involved in RNA processing and mRNA degradation.

The protein localises to the cytoplasm. The catalysed reaction is ATP + H2O = ADP + phosphate + H(+). Functionally, DEAD-box RNA helicase involved in RNA degradation. Has RNA-dependent ATPase activity and unwinds double-stranded RNA. This is ATP-dependent RNA helicase RhlB from Vibrio campbellii (strain ATCC BAA-1116).